A 37-amino-acid chain; its full sequence is Large ribosomal subunit protein bL36c (37 aa).

The protein belongs to the bacterial ribosomal protein bL36 family.

The protein localises to the plastid. It localises to the chloroplast. This Oltmannsiellopsis viridis (Marine flagellate) protein is Large ribosomal subunit protein bL36c.